A 617-amino-acid chain; its full sequence is Ceramide transfer protein (617 aa).

Positions 1-11 (MSDNQSWNSSG) are enriched in polar residues. Residues 1–23 (MSDNQSWNSSGSEEDLETESGPP) form a disordered region. One can recognise a PH domain in the interval 23 to 117 (PVERCGVLSK…WIDSIEQHKS (95 aa)). Residues 268–302 (REDSWQKRLDKEIEKRRRVEEAYKNAMTELKKKSH) adopt a coiled-coil conformation. The FFAT signature appears at 320–326 (EFFDAVE). Residues 332 to 344 (QDKIEQSQSEKGR) show a composition bias toward basic and acidic residues. The interval 332-355 (QDKIEQSQSEKGRSHWPSSLPSTE) is disordered. The START domain occupies 383–611 (DEHRFRIQVE…FTSYVQEKTA (229 aa)). 4 residues coordinate an N-acylsphing-4-enine: E466, Q487, N524, and Y572.

The protein resides in the cytoplasm. Its subcellular location is the golgi apparatus. The protein localises to the endoplasmic reticulum. The catalysed reaction is N-hexadecanoylsphing-4-enine(in) = N-hexadecanoylsphing-4-enine(out). May mediate the intracellular trafficking of ceramide in a non-vesicular manner. This is Ceramide transfer protein (cert1) from Xenopus tropicalis (Western clawed frog).